Consider the following 963-residue polypeptide: uncharacterized protein (963 aa).

2 coiled-coil regions span residues Asn-176–Met-236 and Asp-373–Val-467. A helical transmembrane segment spans residues Ile-468–Ile-488. Coiled-coil stretches lie at residues Arg-536–Ala-570 and Ala-647–Ser-789.

It localises to the cell membrane. This is an uncharacterized protein from Bacillus subtilis (strain 168).